Reading from the N-terminus, the 262-residue chain is 3-methyl-2-oxobutanoate hydroxymethyltransferase (262 aa).

Mg(2+) contacts are provided by aspartate 44 and aspartate 83. Residues aspartate 44–serine 45, aspartate 83, and lysine 112 each bind 3-methyl-2-oxobutanoate. Glutamate 114 is a binding site for Mg(2+). Residue glutamate 180 is the Proton acceptor of the active site.

Belongs to the PanB family. Homodecamer; pentamer of dimers. Mg(2+) is required as a cofactor.

It is found in the cytoplasm. The enzyme catalyses 3-methyl-2-oxobutanoate + (6R)-5,10-methylene-5,6,7,8-tetrahydrofolate + H2O = 2-dehydropantoate + (6S)-5,6,7,8-tetrahydrofolate. Its pathway is cofactor biosynthesis; (R)-pantothenate biosynthesis; (R)-pantoate from 3-methyl-2-oxobutanoate: step 1/2. Its function is as follows. Catalyzes the reversible reaction in which hydroxymethyl group from 5,10-methylenetetrahydrofolate is transferred onto alpha-ketoisovalerate to form ketopantoate. The polypeptide is 3-methyl-2-oxobutanoate hydroxymethyltransferase (Chromobacterium violaceum (strain ATCC 12472 / DSM 30191 / JCM 1249 / CCUG 213 / NBRC 12614 / NCIMB 9131 / NCTC 9757 / MK)).